A 205-amino-acid polypeptide reads, in one-letter code: UPF0301 protein Bind_0718 (205 aa).

The protein belongs to the UPF0301 (AlgH) family.

This Beijerinckia indica subsp. indica (strain ATCC 9039 / DSM 1715 / NCIMB 8712) protein is UPF0301 protein Bind_0718.